Reading from the N-terminus, the 113-residue chain is Putative pterin-4-alpha-carbinolamine dehydratase (113 aa).

This sequence belongs to the pterin-4-alpha-carbinolamine dehydratase family.

The catalysed reaction is (4aS,6R)-4a-hydroxy-L-erythro-5,6,7,8-tetrahydrobiopterin = (6R)-L-erythro-6,7-dihydrobiopterin + H2O. This Hydrogenovibrio crunogenus (strain DSM 25203 / XCL-2) (Thiomicrospira crunogena) protein is Putative pterin-4-alpha-carbinolamine dehydratase.